Here is a 414-residue protein sequence, read N- to C-terminus: Protein MAK11 (414 aa).

Serine 2 carries the post-translational modification N-acetylserine. WD repeat units lie at residues 50 to 78, 90 to 135, 147 to 177, 189 to 221, 238 to 267, and 298 to 330; these read AHSLSIKCLAVSRRYLVSGSNDEHIRIYD, SHQG…MVWR, GHTARVNDVDIHPTNRIAISVSDDHSIRLWN, LRKYNTNGTCVRWLGAKGDYFAVGLRDRVLIYE, LMHIETHILPFDNKEYLSVGISDGNVHFYP, and GHTNRIKDFKFYTNEFGTYLVTIGSDGKIVVWD. 2 positions are modified to phosphoserine: serine 376 and serine 380. Threonine 382 carries the post-translational modification Phosphothreonine.

As to quaternary structure, associates with 60S pre-ribosomal particles.

The protein resides in the nucleus. It is found in the nucleolus. The protein localises to the nucleus membrane. Its function is as follows. Essential for cell growth. Plays a role in assembly of 60S pre-ribosomal particles in the nucleolus. Also required for replication of the M1 double-stranded RNA of the L-A virus. This latter function may reflect an enhanced requirement for free 60S ribosomal particles for the translation of viral mRNAs which lack poly-A tails. This chain is Protein MAK11 (MAK11), found in Saccharomyces cerevisiae (strain ATCC 204508 / S288c) (Baker's yeast).